A 301-amino-acid polypeptide reads, in one-letter code: Golgi to ER traffic protein 2 (301 aa).

At 1-167 the chain is on the cytoplasmic side; the sequence is MSEPVVDTAE…LEYNTYNQKL (167 aa). Residues 42–55 show a composition bias toward low complexity; the sequence is SQGSSVKTSGVKSV. The disordered stretch occupies residues 42–93; sequence SQGSSVKTSGVKSVLDQEKEATSSHDDDPEIQDITEITTPPPRTPPIGEDAP. Basic and acidic residues predominate over residues 56-67; it reads LDQEKEATSSHD. A helical membrane pass occupies residues 168–188; it reads WKFRFLLVRVLVTLFNFFYHY. Residues 189–214 are Lumenal-facing; the sequence is TSISDFHASNYAYVRDLSSEEYPVRD. Residues 215-234 traverse the membrane as a helical segment; sequence FFTWFATSEVVLVAAYYSVF. The Cytoplasmic segment spans residues 235–278; the sequence is HSLGLFHAANQNSIILKVMSMGSMILPQLESYKPLVARFLGYYE. The chain crosses the membrane as a helical span at residues 279-299; it reads LLGIVLGGLSLVIVLFGLLSF. Over 300 to 301 the chain is Lumenal; sequence AN.

Belongs to the GET2 family. Component of the Golgi to ER traffic (GET) complex, which is composed of GET1, GET2 and GET3. Within the complex, GET1 and GET2 form a heterotetramer which is stabilized by phosphatidylinositol binding and which binds to the GET3 homodimer.

It localises to the endoplasmic reticulum membrane. The protein resides in the golgi apparatus membrane. In terms of biological role, required for the post-translational delivery of tail-anchored (TA) proteins to the endoplasmic reticulum. Together with GET1, acts as a membrane receptor for soluble GET3, which recognizes and selectively binds the transmembrane domain of TA proteins in the cytosol. The GET complex cooperates with the HDEL receptor ERD2 to mediate the ATP-dependent retrieval of resident ER proteins that contain a C-terminal H-D-E-L retention signal from the Golgi to the ER. This chain is Golgi to ER traffic protein 2, found in Candida dubliniensis (strain CD36 / ATCC MYA-646 / CBS 7987 / NCPF 3949 / NRRL Y-17841) (Yeast).